A 90-amino-acid polypeptide reads, in one-letter code: Cell division topological specificity factor (90 aa).

This sequence belongs to the MinE family.

Functionally, prevents the cell division inhibition by proteins MinC and MinD at internal division sites while permitting inhibition at polar sites. This ensures cell division at the proper site by restricting the formation of a division septum at the midpoint of the long axis of the cell. This Francisella tularensis subsp. tularensis (strain FSC 198) protein is Cell division topological specificity factor.